We begin with the raw amino-acid sequence, 522 residues long: DEAD-box ATP-dependent RNA helicase 1 (522 aa).

The Q motif motif lies at 30-59 (CALDTLPCLNPKLKKALENMGISSLFPVQV). One can recognise a Helicase ATP-binding domain in the interval 66-297 (IGPGGFERDI…QLDLHHPLFM (232 aa)). Position 79 to 86 (79 to 86 (SPTGSGKT)) interacts with ATP. Residues 207 to 210 (DETD) carry the DEAD box motif. In terms of domain architecture, Helicase C-terminal spans 325–475 (YLVALLKSWE…PIPPTSLDSI (151 aa)). Positions 490–522 (VESEAPKKGRQAFRHNSRTGNSQTKLNKPRSEA) are disordered. A compositionally biased stretch (basic residues) spans 497–506 (KGRQAFRHNS).

The protein belongs to the DEAD box helicase family. DDX51/DBP6 subfamily.

It carries out the reaction ATP + H2O = ADP + phosphate + H(+). This Arabidopsis thaliana (Mouse-ear cress) protein is DEAD-box ATP-dependent RNA helicase 1 (RH1).